The following is a 141-amino-acid chain: Large ribosomal subunit protein uL11 (141 aa).

The protein belongs to the universal ribosomal protein uL11 family. Part of the ribosomal stalk of the 50S ribosomal subunit. Interacts with L10 and the large rRNA to form the base of the stalk. L10 forms an elongated spine to which L12 dimers bind in a sequential fashion forming a multimeric L10(L12)X complex. In terms of processing, one or more lysine residues are methylated.

In terms of biological role, forms part of the ribosomal stalk which helps the ribosome interact with GTP-bound translation factors. This is Large ribosomal subunit protein uL11 from Helicobacter hepaticus (strain ATCC 51449 / 3B1).